The chain runs to 856 residues: Villin-like protein (856 aa).

Gelsolin-like repeat units follow at residues 22–74 (RKMV…EAQG), 146–186 (VSAT…SEKA), 263–307 (LVVL…QERK), 401–450 (LHRQ…DEIE), 521–561 (TRTM…DQRE), and 624–665 (LVLA…WKEA). The interval 762–796 (SQDSSENDLVRSPKSAGSRTSSSVSSTSATINGGL) is disordered. The span at 776-791 (SAGSRTSSSVSSTSAT) shows a compositional bias: low complexity. In terms of domain architecture, HP spans 790–856 (ATINGGLRRE…RQEKKQLGFF (67 aa)).

Belongs to the villin/gelsolin family. Ubiquitously expressed in 16 tissues examined.

Functionally, possible tumor suppressor. The polypeptide is Villin-like protein (VILL) (Homo sapiens (Human)).